The following is a 281-amino-acid chain: 2-dehydro-3-deoxyphosphooctonate aldolase (281 aa).

This sequence belongs to the KdsA family.

Its subcellular location is the cytoplasm. The catalysed reaction is D-arabinose 5-phosphate + phosphoenolpyruvate + H2O = 3-deoxy-alpha-D-manno-2-octulosonate-8-phosphate + phosphate. It participates in carbohydrate biosynthesis; 3-deoxy-D-manno-octulosonate biosynthesis; 3-deoxy-D-manno-octulosonate from D-ribulose 5-phosphate: step 2/3. Its pathway is bacterial outer membrane biogenesis; lipopolysaccharide biosynthesis. The polypeptide is 2-dehydro-3-deoxyphosphooctonate aldolase (Pseudomonas paraeruginosa (strain DSM 24068 / PA7) (Pseudomonas aeruginosa (strain PA7))).